The primary structure comprises 348 residues: Anthranilate phosphoribosyltransferase (348 aa).

Residues glycine 81, 84-85 (GD), threonine 89, 91-94 (NIST), 109-117 (KHGNRAMSS), and serine 121 contribute to the 5-phospho-alpha-D-ribose 1-diphosphate site. Glycine 81 is a binding site for anthranilate. Serine 93 contributes to the Mg(2+) binding site. Asparagine 112 contributes to the anthranilate binding site. Anthranilate is bound at residue arginine 167. Mg(2+) contacts are provided by aspartate 226 and glutamate 227.

Belongs to the anthranilate phosphoribosyltransferase family. In terms of assembly, homodimer. Mg(2+) is required as a cofactor.

The enzyme catalyses N-(5-phospho-beta-D-ribosyl)anthranilate + diphosphate = 5-phospho-alpha-D-ribose 1-diphosphate + anthranilate. The protein operates within amino-acid biosynthesis; L-tryptophan biosynthesis; L-tryptophan from chorismate: step 2/5. Functionally, catalyzes the transfer of the phosphoribosyl group of 5-phosphorylribose-1-pyrophosphate (PRPP) to anthranilate to yield N-(5'-phosphoribosyl)-anthranilate (PRA). The protein is Anthranilate phosphoribosyltransferase of Thermomicrobium roseum (strain ATCC 27502 / DSM 5159 / P-2).